The following is a 461-amino-acid chain: MNDQYHRAARDGYLELLKEATRKELNAPDEDGMTPTLWAAYHGNLESLRLIVSRGGDPDKCDIWGNTPLHLAASNGHLHCLSFLVSFGANIWCLDNDYHTPLDMAAMKGHMECVRYLDSIAAKQSSLNPKLVGKLKDKAFREAERRIRECAKLQRRHHERMERRYRRELAERSDTLSFSSLTSSTLSRRLQHLALGSHLPYSQATLHGTARGKTKMQKKLERRKQGGEGTFKVSEDGRKSARSLSGLQLGSDVMFVRQGTYANPKEWGRAPLRDMFLSDEDSVSRATLAAEPAHSEVSTDSGHDSLFTRPGLGTMVFRRNYLSSGLHGLGREDGGLDGVGAPRGRLQSSPSLDDDSLGSANSLQDRSCGEELPWDELDLGLDEDLEPETSPLETFLASLHMEDFAALLRQEKIDLEALMLCSDLDLRSISVPLGPRKKILGAVRRRRQAMERPPALEDTEL.

3 ANK repeats span residues 31–60, 64–93, and 97–126; these read DGMT…DPDK, WGNT…NIWC, and DYHT…KQSS. 2 disordered regions span residues 208–243 and 332–368; these read GTAR…SARS and EDGG…DRSC. Basic residues predominate over residues 210 to 222; the sequence is ARGKTKMQKKLER. Residues 385–447 form the SAM domain; the sequence is LEPETSPLET…KILGAVRRRR (63 aa). Phosphoserine; by CK2 is present on Ser422.

As to quaternary structure, part of a complex composed of USH1C, USH1G and MYO7A. Interacts with USH1C (via the first PDZ domain). Interacts with PDZD7. Interacts with CDH23 and PCDH15; these interactions may recruit USH1G to the plasma membrane. Interacts with intraflagellar transport proteins IFT20, IFT52 and IFT57. Interacts with splicing factors SF3B1, PRPF6, PRPF31 and SON. Interacts with the U4/U6.U5 tri-small nuclear ribonucleoprotein (tri-snRNP) complex in the presence of pre-mRNAs. Interacts (via SAM domain) with MAGI2 (via PDZ 6 domain); the interaction is triggered by phosphorylation of USH1G by CK2 and negatively regulates MAGI2-mediated endocytosis. Expressed in vestibule of the inner ear, eye and small intestine.

It localises to the cytoplasm. The protein resides in the cytosol. It is found in the cytoskeleton. The protein localises to the cell membrane. Its subcellular location is the cell projection. It localises to the cilium. The protein resides in the nucleus speckle. It is found in the nucleus. The protein localises to the cajal body. Its subcellular location is the microtubule organizing center. It localises to the centrosome. The protein resides in the photoreceptor inner segment. Plays a role in pre-mRNA splicing by regulating the release and transfer of U4/U6.U5 tri-small nuclear ribonucleoprotein (tri-snRNP) complexes from their assembly site in Cajal bodies to nuclear speckles, thereby contributing to the assembly of the pre-catalytic spliceosome on target pre-mRNAs. May also participate in recycling of snRNPs back to Cajal bodies during splicing. Plays a role in regulating MAGI2-mediated endocytosis. Anchoring/scaffolding protein that is a part of the functional network formed by USH1C, USH1G, CDH23 and MYO7A that mediates mechanotransduction in cochlear hair cells. Required for normal development and maintenance of cochlear hair cell bundles. Required for normal hearing. This chain is pre-mRNA splicing regulator USH1G (USH1G), found in Homo sapiens (Human).